A 293-amino-acid polypeptide reads, in one-letter code: Indole-3-glycerol phosphate synthase (293 aa).

Belongs to the TrpC family.

The enzyme catalyses 1-(2-carboxyphenylamino)-1-deoxy-D-ribulose 5-phosphate + H(+) = (1S,2R)-1-C-(indol-3-yl)glycerol 3-phosphate + CO2 + H2O. It participates in amino-acid biosynthesis; L-tryptophan biosynthesis; L-tryptophan from chorismate: step 4/5. This chain is Indole-3-glycerol phosphate synthase, found in Prochlorococcus marinus (strain SARG / CCMP1375 / SS120).